A 126-amino-acid chain; its full sequence is Large ribosomal subunit protein bL12 (126 aa).

Belongs to the bacterial ribosomal protein bL12 family. As to quaternary structure, homodimer. Part of the ribosomal stalk of the 50S ribosomal subunit. Forms a multimeric L10(L12)X complex, where L10 forms an elongated spine to which 2 to 4 L12 dimers bind in a sequential fashion. Binds GTP-bound translation factors.

Its function is as follows. Forms part of the ribosomal stalk which helps the ribosome interact with GTP-bound translation factors. Is thus essential for accurate translation. The polypeptide is Large ribosomal subunit protein bL12 (Beijerinckia indica subsp. indica (strain ATCC 9039 / DSM 1715 / NCIMB 8712)).